A 93-amino-acid polypeptide reads, in one-letter code: Pyrimidine/purine nucleoside phosphorylase (93 aa).

It belongs to the nucleoside phosphorylase PpnP family.

The enzyme catalyses a purine D-ribonucleoside + phosphate = a purine nucleobase + alpha-D-ribose 1-phosphate. It catalyses the reaction adenosine + phosphate = alpha-D-ribose 1-phosphate + adenine. The catalysed reaction is cytidine + phosphate = cytosine + alpha-D-ribose 1-phosphate. It carries out the reaction guanosine + phosphate = alpha-D-ribose 1-phosphate + guanine. The enzyme catalyses inosine + phosphate = alpha-D-ribose 1-phosphate + hypoxanthine. It catalyses the reaction thymidine + phosphate = 2-deoxy-alpha-D-ribose 1-phosphate + thymine. The catalysed reaction is uridine + phosphate = alpha-D-ribose 1-phosphate + uracil. It carries out the reaction xanthosine + phosphate = alpha-D-ribose 1-phosphate + xanthine. Its function is as follows. Catalyzes the phosphorolysis of diverse nucleosides, yielding D-ribose 1-phosphate and the respective free bases. Can use uridine, adenosine, guanosine, cytidine, thymidine, inosine and xanthosine as substrates. Also catalyzes the reverse reactions. This chain is Pyrimidine/purine nucleoside phosphorylase, found in Magnetococcus marinus (strain ATCC BAA-1437 / JCM 17883 / MC-1).